Reading from the N-terminus, the 488-residue chain is 3-octaprenyl-4-hydroxybenzoate carboxy-lyase (488 aa).

Residue Asn172 participates in Mn(2+) binding. Residues 175-177 (IYR), 189-191 (RWL), and 194-195 (RG) contribute to the prenylated FMN site. Glu238 provides a ligand contact to Mn(2+). The active-site Proton donor is Asp287.

Belongs to the UbiD family. As to quaternary structure, homohexamer. Requires prenylated FMN as cofactor. Mn(2+) serves as cofactor.

It is found in the cell membrane. The enzyme catalyses a 4-hydroxy-3-(all-trans-polyprenyl)benzoate + H(+) = a 2-(all-trans-polyprenyl)phenol + CO2. Its pathway is cofactor biosynthesis; ubiquinone biosynthesis. Its function is as follows. Catalyzes the decarboxylation of 3-octaprenyl-4-hydroxy benzoate to 2-octaprenylphenol, an intermediate step in ubiquinone biosynthesis. The polypeptide is 3-octaprenyl-4-hydroxybenzoate carboxy-lyase (Legionella pneumophila (strain Lens)).